Here is an 893-residue protein sequence, read N- to C-terminus: Major vault protein (893 aa).

Alanine 2 is subject to N-acetylalanine. MVP repeat units follow at residues 2 to 56 (ATEE…VPPR), 57 to 111 (HYCT…DITP), 112 to 164 (LQVV…EIIQ), 165 to 217 (ATII…DLVD), 218 to 272 (AVIL…GVVP), 273 to 323 (ITTL…IQDV), 324 to 379 (YVLS…ERQA), 380 to 457 (IPLD…KTRV), and 458 to 520 (VSYR…LLGP). A Glycyl lysine isopeptide (Lys-Gly) (interchain with G-Cter in SUMO2) cross-link involves residue lysine 444. Residue serine 445 is modified to Phosphoserine. Lysine 704 is covalently cross-linked (Glycyl lysine isopeptide (Lys-Gly) (interchain with G-Cter in SUMO2)). Positions 856-893 (QPLGRRVASGPSPGEGISPQSAQAPQAPGDNHVVPVLR) are disordered.

As to quaternary structure, the vault ribonucleoprotein particle is a huge (400 A x 670 A) cage structure of 12.9 MDa. It consists of a dimer of half-vaults, with each half-vault comprising 39 identical major vault protein (MVP) chains, PARP4 and one or more vault RNAs (vRNAs). Interacts with TEP1. Interacts with PTEN and activated MAPK1. The phosphorylated protein interacts with the SH2 domains of PTPN11 and SRC. Interacts with APEX1. May interact with ZNF540. Post-translationally, phosphorylated on Tyr residues after EGF stimulation. Dephosphorylated by PTPN11.

The protein resides in the cytoplasm. It localises to the nucleus. Functionally, required for normal vault structure. Vaults are multi-subunit structures that may act as scaffolds for proteins involved in signal transduction. Vaults may also play a role in nucleo-cytoplasmic transport. Down-regulates IFNG-mediated STAT1 signaling and subsequent activation of JAK. Down-regulates SRC activity and signaling through MAP kinases. The chain is Major vault protein (MVP) from Pongo abelii (Sumatran orangutan).